The sequence spans 337 residues: MSAVRIGQYTLRNNLILAPMAGVTDQPFRTLCQRLGAGMVVSEMVSSDMSLWNSRKSSLRRIHEGDPEPRSVQIAGGDAQMMAAAAKANVEAGAQIIDINMGCPAKKVCNKAAGSALLRDEALVSEILHAVVSAVDVPVTLKIRTGWDRANKNGLNVAKIAEQAGIQALAVHGRTRADLYTGEAEYDTIGAIKQAVSIPVFANGDITSPEKARAVLETTGVDGLLIGRAAQGRPWIFREIEHYLRTGEHLPAPQLDEVERILLEHLAALHAFYGDVMGVRIARKHVGWYLATRPGGKEFRARFNALEDTQAQCANVRAFFSERRQSLETEDGQGVAA.

Residues 19–21 (PMA) and Gln-73 each bind FMN. Residue Cys-103 is the Proton donor of the active site. Residues Lys-142, 203-205 (NGD), and 227-228 (GR) contribute to the FMN site.

Belongs to the Dus family. DusB subfamily. The cofactor is FMN.

It carries out the reaction a 5,6-dihydrouridine in tRNA + NAD(+) = a uridine in tRNA + NADH + H(+). The enzyme catalyses a 5,6-dihydrouridine in tRNA + NADP(+) = a uridine in tRNA + NADPH + H(+). Catalyzes the synthesis of 5,6-dihydrouridine (D), a modified base found in the D-loop of most tRNAs, via the reduction of the C5-C6 double bond in target uridines. This is tRNA-dihydrouridine synthase B from Pseudomonas putida (strain ATCC 47054 / DSM 6125 / CFBP 8728 / NCIMB 11950 / KT2440).